A 214-amino-acid chain; its full sequence is Probable maleylacetoacetate isomerase (214 aa).

A GST N-terminal domain is found at Gln4–Pro84. Residues Ser14 to Arg19, Val56, Glu68 to Ser69, Gln108, and Asn112 to Lys114 each bind glutathione. Residues Asp89–Leu212 enclose the GST C-terminal domain.

The protein belongs to the GST superfamily. Zeta family. Glutathione serves as cofactor.

Its subcellular location is the cytoplasm. It catalyses the reaction 4-maleylacetoacetate = 4-fumarylacetoacetate. It functions in the pathway amino-acid degradation; L-phenylalanine degradation; acetoacetate and fumarate from L-phenylalanine: step 5/6. In Caenorhabditis elegans, this protein is Probable maleylacetoacetate isomerase (gst-42).